The chain runs to 315 residues: Homoserine kinase (315 aa).

97–107 (PPARGLGSSAT) serves as a coordination point for ATP.

Belongs to the GHMP kinase family. Homoserine kinase subfamily.

The protein resides in the cytoplasm. The enzyme catalyses L-homoserine + ATP = O-phospho-L-homoserine + ADP + H(+). It functions in the pathway amino-acid biosynthesis; L-threonine biosynthesis; L-threonine from L-aspartate: step 4/5. Its function is as follows. Catalyzes the ATP-dependent phosphorylation of L-homoserine to L-homoserine phosphate. This is Homoserine kinase from Prochlorococcus marinus (strain NATL2A).